A 352-amino-acid chain; its full sequence is Phenylalanine--tRNA ligase alpha subunit (352 aa).

Position 258 (E258) interacts with Mg(2+).

Belongs to the class-II aminoacyl-tRNA synthetase family. Phe-tRNA synthetase alpha subunit type 1 subfamily. Tetramer of two alpha and two beta subunits. It depends on Mg(2+) as a cofactor.

It localises to the cytoplasm. It catalyses the reaction tRNA(Phe) + L-phenylalanine + ATP = L-phenylalanyl-tRNA(Phe) + AMP + diphosphate + H(+). The chain is Phenylalanine--tRNA ligase alpha subunit from Staphylococcus epidermidis (strain ATCC 35984 / DSM 28319 / BCRC 17069 / CCUG 31568 / BM 3577 / RP62A).